The chain runs to 223 residues: uncharacterized protein (223 aa).

7 helical membrane-spanning segments follow: residues 25–45, 46–66, 78–98, 105–125, 140–160, 161–181, and 199–219; these read TYFLLSMTLVTSAIAAMATMA, IGISPIVALVMQLAAIGILFF, LVWTFVFTGLMGGALGPMLNF, GPIVIAQALGLTGMVFLGLSA, FLFAGLIIVIVAALINIFVGS, TVAHLAISSVSALVFSGFILF, and ISMYLNILNLFTSLLSILGIM.

Belongs to the BI1 family.

The protein localises to the cell membrane. This is an uncharacterized protein from Vibrio cholerae serotype O1 (strain ATCC 39315 / El Tor Inaba N16961).